The chain runs to 449 residues: Tubulin alpha-8 chain (449 aa).

The short motif at 1-4 is the MREC motif element; the sequence is MREC. GTP contacts are provided by Q11, E71, S140, G144, T145, T179, N206, and N228. Residue E71 participates in Mg(2+) binding. The active site involves E254.

Belongs to the tubulin family. As to quaternary structure, dimer of alpha and beta chains. A typical microtubule is a hollow water-filled tube with an outer diameter of 25 nm and an inner diameter of 15 nM. Alpha-beta heterodimers associate head-to-tail to form protofilaments running lengthwise along the microtubule wall with the beta-tubulin subunit facing the microtubule plus end conferring a structural polarity. Microtubules usually have 13 protofilaments but different protofilament numbers can be found in some organisms and specialized cells. It depends on Mg(2+) as a cofactor. Post-translationally, some glutamate residues at the C-terminus are polyglycylated, resulting in polyglycine chains on the gamma-carboxyl group. Glycylation is mainly limited to tubulin incorporated into axonemes (cilia and flagella) whereas glutamylation is prevalent in neuronal cells, centrioles, axonemes, and the mitotic spindle. Both modifications can coexist on the same protein on adjacent residues, and lowering polyglycylation levels increases polyglutamylation, and reciprocally. Cilia and flagella glycylation is required for their stability and maintenance. Flagella glycylation controls sperm motility. Some glutamate residues at the C-terminus are polyglutamylated, resulting in polyglutamate chains on the gamma-carboxyl group. Polyglutamylation plays a key role in microtubule severing by spastin (SPAST). SPAST preferentially recognizes and acts on microtubules decorated with short polyglutamate tails: severing activity by SPAST increases as the number of glutamates per tubulin rises from one to eight, but decreases beyond this glutamylation threshold. Glutamylation is also involved in cilia motility. In terms of processing, the C-terminal phenylalanine residue is cleaved by MATCAP1/KIAA0895L.

Its subcellular location is the cytoplasm. It is found in the cytoskeleton. The enzyme catalyses GTP + H2O = GDP + phosphate + H(+). Its function is as follows. Tubulin is the major constituent of microtubules, a cylinder consisting of laterally associated linear protofilaments composed of alpha- and beta-tubulin heterodimers. Microtubules grow by the addition of GTP-tubulin dimers to the microtubule end, where a stabilizing cap forms. Below the cap, tubulin dimers are in GDP-bound state, owing to GTPase activity of alpha-tubulin. This chain is Tubulin alpha-8 chain (TUBA8), found in Bos taurus (Bovine).